Consider the following 159-residue polypeptide: Regulatory protein RecX (159 aa).

The protein belongs to the RecX family.

The protein localises to the cytoplasm. In terms of biological role, modulates RecA activity. The protein is Regulatory protein RecX of Ralstonia pickettii (strain 12J).